Consider the following 398-residue polypeptide: Odorant receptor 59b (398 aa).

The Cytoplasmic segment spans residues 1–46 (MAVFKLIKPAPLTEKVQSRQGNIYLYRAMWLIGWIPPKEGVLRYVY). Residues 47–67 (LFWTCVPFAFGVFYLPVGFII) traverse the membrane as a helical segment. The Extracellular portion of the chain corresponds to 68-84 (SYVQEFKNFTPGEFLTS). The helical transmembrane segment at 85 to 105 (LQVCINVYGASVKSTITYLFL) threads the bilayer. Residues 106 to 141 (WRLRKTEILLDSLDKRLANDSDRERIHNMVARCNYA) are Cytoplasmic-facing. The helical transmembrane segment at 142 to 162 (FLIYSFIYCGYAGSTFLSYAL) threads the bilayer. Residues 163–179 (SGRPPWSVYNPFIDWRD) lie on the Extracellular side of the membrane. A helical transmembrane segment spans residues 180–200 (GMGSLWIQAIFEYITMSFAVL). Topologically, residues 201–269 (QDQLSDTYPL…DMIRPMISRT (69 aa)) are cytoplasmic. A helical transmembrane segment spans residues 270-290 (IFVQFALIGSVLGLTLVNVFF). The Extracellular portion of the chain corresponds to 291 to 293 (FSN). A helical membrane pass occupies residues 294-314 (FWKGVASLLFVITILLQTFPF). Topologically, residues 315 to 348 (CYTCNMLIDDAQDLSNEIFQSNWVDAEPRYKATL) are cytoplasmic. A helical transmembrane segment spans residues 349–369 (VLFMHHVQQPIIFIAGGIFPI). At 370–398 (SMNSNITVAKFAFSIITIVRQMNLAEQFQ) the chain is on the extracellular side. The N-linked (GlcNAc...) asparagine glycan is linked to asparagine 374.

This sequence belongs to the insect chemoreceptor superfamily. Heteromeric odorant receptor channel (TC 1.A.69) family. Or2a subfamily. Interacts with Orco. Complexes exist early in the endomembrane system in olfactory sensory neurons (OSNs), coupling these complexes to the conserved ciliary trafficking pathway. Expressed in olfactory sensory neurons in the antenna.

The protein localises to the cell membrane. Its function is as follows. Odorant receptor which mediates acceptance or avoidance behavior, depending on its substrates. The odorant receptor repertoire encodes a large collection of odor stimuli that vary widely in identity, intensity, and duration. Forms a complex with Orco to form odorant-sensing units, providing sensitive and prolonged odorant signaling and calcium permeability. Also plays a role in the response to N,N-Diethyl-meta-toluamide (DEET), the most widely used insect repellent worldwide. In Drosophila melanogaster (Fruit fly), this protein is Odorant receptor 59b (Or59b).